A 69-amino-acid polypeptide reads, in one-letter code: Sec-independent protein translocase protein TatA (69 aa).

A helical transmembrane segment spans residues 1–21; it reads MGSLSIWHWLIVLAIALLLFG. Residues 41-69 form a disordered region; it reads KGMNDDEETPPPAQSTTSRTVEHKADESK. Positions 60 to 69 are enriched in basic and acidic residues; it reads TVEHKADESK.

This sequence belongs to the TatA/E family. As to quaternary structure, the Tat system comprises two distinct complexes: a TatABC complex, containing multiple copies of TatA, TatB and TatC subunits, and a separate TatA complex, containing only TatA subunits. Substrates initially bind to the TatABC complex, which probably triggers association of the separate TatA complex to form the active translocon.

It is found in the cell inner membrane. Part of the twin-arginine translocation (Tat) system that transports large folded proteins containing a characteristic twin-arginine motif in their signal peptide across membranes. TatA could form the protein-conducting channel of the Tat system. This is Sec-independent protein translocase protein TatA from Rhizobium rhizogenes (strain K84 / ATCC BAA-868) (Agrobacterium radiobacter).